Here is a 285-residue protein sequence, read N- to C-terminus: RNase adapter protein RapZ (285 aa).

8-15 (GRSGSGKS) contributes to the ATP binding site. A GTP-binding site is contributed by 56-59 (DVRN). Residues 266-285 (RSRGKNVQSRHRTLEKRKPS) form an RNA-binding region.

Belongs to the RapZ-like family. RapZ subfamily. Homotrimer.

Its function is as follows. Modulates the synthesis of GlmS, by affecting the processing and stability of the regulatory small RNA GlmZ. When glucosamine-6-phosphate (GlcN6P) concentrations are high in the cell, RapZ binds GlmZ and targets it to cleavage by RNase E. Consequently, GlmZ is inactivated and unable to activate GlmS synthesis. Under low GlcN6P concentrations, RapZ is sequestered and inactivated by an other regulatory small RNA, GlmY, preventing GlmZ degradation and leading to synthesis of GlmS. This chain is RNase adapter protein RapZ, found in Pectobacterium atrosepticum (strain SCRI 1043 / ATCC BAA-672) (Erwinia carotovora subsp. atroseptica).